A 441-amino-acid polypeptide reads, in one-letter code: Glutamate-1-semialdehyde 2,1-aminomutase (441 aa).

At lysine 273 the chain carries N6-(pyridoxal phosphate)lysine.

Belongs to the class-III pyridoxal-phosphate-dependent aminotransferase family. HemL subfamily. The cofactor is pyridoxal 5'-phosphate.

It localises to the cytoplasm. The catalysed reaction is (S)-4-amino-5-oxopentanoate = 5-aminolevulinate. It functions in the pathway porphyrin-containing compound metabolism; protoporphyrin-IX biosynthesis; 5-aminolevulinate from L-glutamyl-tRNA(Glu): step 2/2. The polypeptide is Glutamate-1-semialdehyde 2,1-aminomutase (Pyrobaculum calidifontis (strain DSM 21063 / JCM 11548 / VA1)).